Consider the following 1379-residue polypeptide: DNA-directed RNA polymerase subunit beta'' (1379 aa).

Residues C220, C293, C300, and C303 each coordinate Zn(2+).

This sequence belongs to the RNA polymerase beta' chain family. RpoC2 subfamily. In plastids the minimal PEP RNA polymerase catalytic core is composed of four subunits: alpha, beta, beta', and beta''. When a (nuclear-encoded) sigma factor is associated with the core the holoenzyme is formed, which can initiate transcription. Zn(2+) serves as cofactor.

It is found in the plastid. The protein resides in the chloroplast. It catalyses the reaction RNA(n) + a ribonucleoside 5'-triphosphate = RNA(n+1) + diphosphate. Its function is as follows. DNA-dependent RNA polymerase catalyzes the transcription of DNA into RNA using the four ribonucleoside triphosphates as substrates. In Barbarea verna (Land cress), this protein is DNA-directed RNA polymerase subunit beta''.